The primary structure comprises 234 residues: Elongation factor Tu (234 aa).

The tr-type G domain occupies 1 to 125 (KNMITGAAQM…EVDAFIPTPE (125 aa)). 47–50 (NKQD) lines the GTP pocket.

Belongs to the TRAFAC class translation factor GTPase superfamily. Classic translation factor GTPase family. EF-Tu/EF-1A subfamily. Monomer.

The protein localises to the cytoplasm. It catalyses the reaction GTP + H2O = GDP + phosphate + H(+). Its function is as follows. GTP hydrolase that promotes the GTP-dependent binding of aminoacyl-tRNA to the A-site of ribosomes during protein biosynthesis. This chain is Elongation factor Tu (tufA), found in Prochlorothrix hollandica.